A 655-amino-acid chain; its full sequence is p-hydroxybenzoic acid efflux pump subunit AaeB (655 aa).

Topologically, residues M1–R12 are periplasmic. A helical transmembrane segment spans residues F13–L33. Residues E34–R37 are Cytoplasmic-facing. Residues W38–P58 form a helical membrane-spanning segment. Over Y59–F68 the chain is Periplasmic. The chain crosses the membrane as a helical span at residues L69–I89. Residues R90–P92 are Cytoplasmic-facing. A helical membrane pass occupies residues L93–V113. Topologically, residues R114–A120 are periplasmic. Residues W121–L141 traverse the membrane as a helical segment. Residues T142–S151 lie on the Cytoplasmic side of the membrane. A helical transmembrane segment spans residues E152–I172. The Periplasmic segment spans residues K173–T369. A helical membrane pass occupies residues L370–V390. Residues T391–D406 are Cytoplasmic-facing. A helical membrane pass occupies residues F407–P427. The Periplasmic segment spans residues N428 to Q430. Residues Q431 to V451 form a helical membrane-spanning segment. At Q452–S458 the chain is on the cytoplasmic side. Residues M459–F479 traverse the membrane as a helical segment. At S480–Q481 the chain is on the periplasmic side. The chain crosses the membrane as a helical span at residues F482–L502. The Cytoplasmic portion of the chain corresponds to V503–S655.

Belongs to the aromatic acid exporter ArAE (TC 2.A.85) family.

The protein resides in the cell inner membrane. Functionally, forms an efflux pump with AaeA. Could function as a metabolic relief valve, allowing to eliminate certain compounds when they accumulate to high levels in the cell. This chain is p-hydroxybenzoic acid efflux pump subunit AaeB, found in Escherichia coli O6:H1 (strain CFT073 / ATCC 700928 / UPEC).